Here is a 283-residue protein sequence, read N- to C-terminus: Pre-protein-C8 (283 aa).

A signal peptide (tat-type signal) is located at residues 1–40 (MKEDNNTSEESGRINRRNVLKTVGAAGLFAAGSTGMAAAA). The tract at residues 61-75 (ARELAKTPAFRELAQ) is helix-loop-helix (HLH) region.

As to quaternary structure, immunity protein HalI interacts with Halocin-C8; the interaction is direct. Predicted to be exported by the Tat system. The position of the signal peptide cleavage has not been experimentally proven.

It localises to the secreted. The protein resides in the cell membrane. Has antibacterial activity against a wide variety of haloarchaeons. Causes cell lysis and death, possibly by disrupting the cell wall. Functionally, acts as an immunity protein for halocin-C8. Able to block the halocin-C8 activity by sequestering the activity of halocin-C8 through specific and direct binding. This chain is Pre-protein-C8 (proC8), found in Halobacterium sp. (strain AS7092).